The sequence spans 737 residues: Polyribonucleotide nucleotidyltransferase (737 aa).

Mg(2+) is bound by residues aspartate 489 and aspartate 495. A KH domain is found at 556–615 (PKIDTIKIDVDKIKIVIGKGGETIDKIIAETGVKIDIDEEGNVSIYSSDQDAINRAKEII). The region spanning 625 to 693 (DEVYRAKVVR…EKGRIDASMK (69 aa)) is the S1 motif domain. A disordered region spans residues 691 to 737 (SMKALLPRPPKPEHDEKGEKSERPHRPRHHKDHKPKKEFTETPKDSE). Positions 700–714 (PKPEHDEKGEKSERP) are enriched in basic and acidic residues. Residues 715–724 (HRPRHHKDHK) are compositionally biased toward basic residues. Basic and acidic residues predominate over residues 725–737 (PKKEFTETPKDSE).

This sequence belongs to the polyribonucleotide nucleotidyltransferase family. Requires Mg(2+) as cofactor.

The protein resides in the cytoplasm. The enzyme catalyses RNA(n+1) + phosphate = RNA(n) + a ribonucleoside 5'-diphosphate. In terms of biological role, involved in mRNA degradation. Catalyzes the phosphorolysis of single-stranded polyribonucleotides processively in the 3'- to 5'-direction. The protein is Polyribonucleotide nucleotidyltransferase of Streptococcus pneumoniae serotype 19F (strain G54).